A 504-amino-acid chain; its full sequence is MTEAALVEGQVKLRDGKKWKSRWLVLRKPSPVADCLLMLVYKDKSERIKGLRERSSLTLEDICGLEPGLPYEGLVHTLAIVCLSQAIMLGFDSHEAMCAWDARIRYALGEVHRFHVTVAPGTKLESGPATLHLCNDVLVLARDIPPAVTGQWKLSDLRRYGAVPSGFIFEGGTRCGYWAGVFFLSSAEGEQISFLFDCIVRGISPTKGPFGLRPVLPDPSPPGPSTVEERVAQEALETLQLEKRLSLLSHAGRPGSGGDDRSLSSSSSEASHLDVSASSRLTAWPEQSSSSASTSQEGPRPAAAQAAGEAMVGASRPPPKPLRPRQLQEVGRQSSSDSGIATGSHSSYSSSLSSYAGSSLDVWRATDELGSLLSLPAAGAPEPSLCTCLPGTVEYQVPTSLRAHYDTPRSLCLAPRDHSPPSQGSPGNSAARDSGGQTSAGCPSGWLGTRRRGLVMEAPQGSEATLPGPAPGEPWEAGGPHAGPPPAFFSACPVCGGLKVNPPP.

The PH domain occupies 4–109; the sequence is AALVEGQVKL…WDARIRYALG (106 aa). The IRS-type PTB domain maps to 105-210; sequence RYALGEVHRF…RGISPTKGPF (106 aa). Disordered regions lie at residues 210 to 229, 249 to 351, and 411 to 483; these read FGLRPVLPDPSPPGPSTVEE, SHAG…YSSS, and LCLA…PHAG. 2 stretches are compositionally biased toward low complexity: residues 263-279 and 288-310; these read LSSSSSEASHLDVSASS and SSSSASTSQEGPRPAAAQAAGEA. Over residues 331-341 the composition is skewed to polar residues; it reads GRQSSSDSGIA.

Homodimer. Forms a heterotetramer composed of 2 DOK7 and 2 MUSK molecules which facilitates MUSK trans-autophosphorylation on tyrosine residue and activation. Interacts (via IRS-type PTB domain) with MUSK (via cytoplasmic part); requires MUSK phosphorylation. In terms of tissue distribution, preferentially expressed in skeletal muscle and heart. Present in thigh muscle, diaphragm and heart but not in the liver or spleen (at protein level).

It is found in the cell membrane. It localises to the synapse. Probable muscle-intrinsic activator of MUSK that plays an essential role in neuromuscular synaptogenesis. Acts in aneural activation of MUSK and subsequent acetylcholine receptor (AchR) clustering in myotubes. Induces autophosphorylation of MUSK. The protein is Protein Dok-7 (DOK7) of Homo sapiens (Human).